The following is a 317-amino-acid chain: Gamma-glutamyl hydrolase (317 aa).

The N-terminal stretch at 1–24 (MASLGRLLCAWVLLLCGLASPGLS) is a signal peptide. The Gamma-glutamyl hydrolase domain maps to 25–317 (GSYERGSKRP…SSFQQAYMFN (293 aa)). 2 N-linked (GlcNAc...) asparagine glycosylation sites follow: asparagine 46 and asparagine 100. The Nucleophile role is filled by cysteine 133. Residues asparagine 153, asparagine 162, asparagine 188, and asparagine 202 are each glycosylated (N-linked (GlcNAc...) asparagine). The active-site Proton donor is the histidine 243. An N-linked (GlcNAc...) asparagine glycan is attached at asparagine 306.

The protein belongs to the peptidase C26 family. As to quaternary structure, homodimer.

It is found in the secreted. It localises to the extracellular space. The protein resides in the lysosome. Its subcellular location is the melanosome. The enzyme catalyses (6S)-5,6,7,8-tetrahydrofolyl-(gamma-L-Glu)(n) + (n-1) H2O = (6S)-5,6,7,8-tetrahydrofolate + (n-1) L-glutamate. With respect to regulation, activity is altered by insulin and estrogen. Its function is as follows. Hydrolyzes the polyglutamate sidechains of pteroylpolyglutamates. Progressively removes gamma-glutamyl residues from pteroylpoly-gamma-glutamate to yield pteroyl-alpha-glutamate (folic acid) and free glutamate. May play an important role in the bioavailability of dietary pteroylpolyglutamates and in the metabolism of pteroylpolyglutamates and antifolates. Exhibits either endo- or exopeptidase activity depending upon the tissue of origin. When secreted, it acts primarily as an endopeptidase. The sequence is that of Gamma-glutamyl hydrolase (Ggh) from Rattus norvegicus (Rat).